Consider the following 295-residue polypeptide: Ribosomal RNA small subunit methyltransferase H (295 aa).

Residues G35–H37, E55, F82, D103, and Q110 each bind S-adenosyl-L-methionine.

It belongs to the methyltransferase superfamily. RsmH family.

It is found in the cytoplasm. The catalysed reaction is cytidine(1402) in 16S rRNA + S-adenosyl-L-methionine = N(4)-methylcytidine(1402) in 16S rRNA + S-adenosyl-L-homocysteine + H(+). In terms of biological role, specifically methylates the N4 position of cytidine in position 1402 (C1402) of 16S rRNA. This Desulfotalea psychrophila (strain LSv54 / DSM 12343) protein is Ribosomal RNA small subunit methyltransferase H.